Here is a 299-residue protein sequence, read N- to C-terminus: 4-diphosphocytidyl-2-C-methyl-D-erythritol kinase (299 aa).

Lysine 33 is a catalytic residue. 115 to 125 contributes to the ATP binding site; the sequence is PLASGLGGGSS. Aspartate 154 is an active-site residue.

It belongs to the GHMP kinase family. IspE subfamily.

It carries out the reaction 4-CDP-2-C-methyl-D-erythritol + ATP = 4-CDP-2-C-methyl-D-erythritol 2-phosphate + ADP + H(+). It functions in the pathway isoprenoid biosynthesis; isopentenyl diphosphate biosynthesis via DXP pathway; isopentenyl diphosphate from 1-deoxy-D-xylulose 5-phosphate: step 3/6. Catalyzes the phosphorylation of the position 2 hydroxy group of 4-diphosphocytidyl-2C-methyl-D-erythritol. This chain is 4-diphosphocytidyl-2-C-methyl-D-erythritol kinase, found in Deinococcus geothermalis (strain DSM 11300 / CIP 105573 / AG-3a).